The chain runs to 70 residues: Conotoxin TxMMSK-02 (70 aa).

An N-terminal signal peptide occupies residues 1–20 (MMSKLGALLTICLLLFSLTA). Residues 21-53 (VPLDGDQHADQPAQRLQDRIPTEDHPLFDPNKR) constitute a propeptide that is removed on maturation. Intrachain disulfides connect Cys54-Cys68, Cys55-Cys64, and Cys60-Cys67. Pro66 bears the 4-hydroxyproline mark. The residue at position 69 (Tyr69) is a Tyrosine amide.

This sequence belongs to the conotoxin M superfamily. As to expression, expressed by the venom duct.

The protein resides in the secreted. The protein is Conotoxin TxMMSK-02 of Conus textile (Cloth-of-gold cone).